A 310-amino-acid chain; its full sequence is Pantothenate kinase (310 aa).

95–102 (GSVAVGKS) provides a ligand contact to ATP.

The protein belongs to the prokaryotic pantothenate kinase family.

It is found in the cytoplasm. The catalysed reaction is (R)-pantothenate + ATP = (R)-4'-phosphopantothenate + ADP + H(+). The protein operates within cofactor biosynthesis; coenzyme A biosynthesis; CoA from (R)-pantothenate: step 1/5. The sequence is that of Pantothenate kinase from Rhodococcus erythropolis (strain PR4 / NBRC 100887).